Here is an 894-residue protein sequence, read N- to C-terminus: Microsomal triglyceride transfer protein large subunit (894 aa).

The N-terminal stretch at 1-18 (MILLAVLFLCFISSYSAS) is a signal peptide. A Vitellogenin domain is found at 28-659 (LNNDRLYKLT…IFQYIGKAGL (632 aa)). Cys-174 and Cys-194 form a disulfide bridge.

In terms of assembly, heterodimer; heterodimerizes with the protein disulfide isomerase (P4HB/PDI). Interacts with APOB. Interacts with PRAP1. As to expression, liver and small intestine. Also found in ovary, testis and kidney.

It localises to the endoplasmic reticulum. Its subcellular location is the golgi apparatus. It carries out the reaction a 1,2-diacyl-sn-glycero-3-phosphocholine(in) = a 1,2-diacyl-sn-glycero-3-phosphocholine(out). It catalyses the reaction a 1,2-diacyl-sn-glycero-3-phosphoethanolamine(in) = a 1,2-diacyl-sn-glycero-3-phosphoethanolamine(out). The catalysed reaction is a cholesterol ester(in) = a cholesterol ester(out). The enzyme catalyses a triacyl-sn-glycerol(in) = a triacyl-sn-glycerol(out). In terms of biological role, catalyzes the transport of triglyceride, cholesteryl ester, and phospholipid between phospholipid surfaces. Required for the assembly and secretion of plasma lipoproteins that contain apolipoprotein B. May be involved in regulating cholesteryl ester biosynthesis in cells that produce lipoproteins. In Homo sapiens (Human), this protein is Microsomal triglyceride transfer protein large subunit (MTTP).